A 188-amino-acid chain; its full sequence is MAIREIIEVPDPRLKQVSVPVEKFDDELKTLVEDMFETMYDAPGIGLAAIQVGVPLRVLVIDLQPDDPDAEPVACDHDGHHHHHQPTKKEPRVFINPEILDPSEEYSVYQEGCLSVPEIYAEVERPATIRARWQDLDGKVHEEQMEGLMATCLQHEMDHLEGVLFIDHLSRLKRNMALKKLEKLRKAA.

A disordered region spans residues 70–90; sequence AEPVACDHDGHHHHHQPTKKE. Fe cation is bound by residues cysteine 113 and histidine 155. The active site involves glutamate 156. Histidine 159 is a binding site for Fe cation.

This sequence belongs to the polypeptide deformylase family. Fe(2+) serves as cofactor.

The enzyme catalyses N-terminal N-formyl-L-methionyl-[peptide] + H2O = N-terminal L-methionyl-[peptide] + formate. Its function is as follows. Removes the formyl group from the N-terminal Met of newly synthesized proteins. Requires at least a dipeptide for an efficient rate of reaction. N-terminal L-methionine is a prerequisite for activity but the enzyme has broad specificity at other positions. This is Peptide deformylase from Novosphingobium aromaticivorans (strain ATCC 700278 / DSM 12444 / CCUG 56034 / CIP 105152 / NBRC 16084 / F199).